The following is a 216-amino-acid chain: Adenylate kinase (216 aa).

10–15 lines the ATP pocket; it reads GAGKGT. Residues 30 to 59 form an NMP region; sequence STGDIFRANIKEKTPLGIEAKRYMDNGQLV. Residues threonine 31, arginine 36, 57–59, 85–88, and glutamine 92 contribute to the AMP site; these read QLV and GFPR. The tract at residues 126-163 is LID; that stretch reads GRRVCTSCGASYHIRFNPPKIEGKCDICDNELIQRKDD. Residue arginine 127 participates in ATP binding. Zn(2+) is bound by residues cysteine 130 and cysteine 133. Position 136 to 137 (136 to 137) interacts with ATP; that stretch reads SY. Cysteine 150 and cysteine 153 together coordinate Zn(2+). Positions 160 and 171 each coordinate AMP. An ATP-binding site is contributed by glutamate 199.

This sequence belongs to the adenylate kinase family. As to quaternary structure, monomer.

It localises to the cytoplasm. It carries out the reaction AMP + ATP = 2 ADP. The protein operates within purine metabolism; AMP biosynthesis via salvage pathway; AMP from ADP: step 1/1. Functionally, catalyzes the reversible transfer of the terminal phosphate group between ATP and AMP. Plays an important role in cellular energy homeostasis and in adenine nucleotide metabolism. This is Adenylate kinase from Clostridium botulinum (strain Loch Maree / Type A3).